A 311-amino-acid polypeptide reads, in one-letter code: MAEALPEAGRYFCHSCTAEIIPRLPEYTCPRCDSGFIEELPETRNSENNSSNNSGTDQNRPSFENLESAQFTLPSGYGQVTFGIFNEGLDFPIFGTSGPVEEPRDGESRREHQSRQRYGARQPRARLSTRRAAGRNEGVPTLEGIIQQLVNGIIAPTAMSNLGVGPWGVLHSNPMDYAWGANGLDTIITQLLNQFENTGPPPADTEKIQALPTIQITEEHVGSGLECPVCKEDYTVGESVRQLPCNHLFHNDCIIPWLEQHDTCPVCRKSLSGQNTATNPPGLTEMTFSSSSTSSSSSTSPTDENNAANNS.

Positions 13, 16, 29, and 32 each coordinate Zn(2+). The segment at 13–32 adopts a C4-type zinc-finger fold; sequence CHSCTAEIIPRLPEYTCPRC. Disordered stretches follow at residues 42 to 62 and 95 to 133; these read ETRN…NRPS and GTSG…RRAA. Positions 101–114 are enriched in basic and acidic residues; sequence EEPRDGESRREHQS. Residues 123–133 are compositionally biased toward basic residues; it reads PRARLSTRRAA. The RING-type zinc-finger motif lies at 227 to 268; sequence CPVCKEDYTVGESVRQLPCNHLFHNDCIIPWLEQHDTCPVCR. The tract at residues 274–311 is disordered; that stretch reads QNTATNPPGLTEMTFSSSSTSSSSSTSPTDENNAANNS. The segment covering 289–300 has biased composition (low complexity); that stretch reads SSSSTSSSSSTS. Over residues 301–311 the composition is skewed to polar residues; that stretch reads PTDENNAANNS.

The protein resides in the cytoplasm. It localises to the nucleus. The catalysed reaction is S-ubiquitinyl-[E2 ubiquitin-conjugating enzyme]-L-cysteine + [acceptor protein]-L-lysine = [E2 ubiquitin-conjugating enzyme]-L-cysteine + N(6)-ubiquitinyl-[acceptor protein]-L-lysine.. Its pathway is protein modification; protein ubiquitination. E3 ubiquitin-protein ligase that mediates ubiquitination oF target proteins. Depending on the associated E2 ligase, mediates 'Lys-27'-, 'Lys-29'-, 'Lys-48'- and/or 'Lys-63'-linked polyubiquitination of substrates. Part of a BAG6-dependent quality control process ensuring that proteins of the secretory pathway that are mislocalized to the cytosol are degraded by the proteasome. Probably acts by providing the ubiquitin ligase activity associated with the BAG6 complex and be responsible for ubiquitination of the hydrophobic mislocalized proteins and their targeting to the proteasome. In Xenopus tropicalis (Western clawed frog), this protein is E3 ubiquitin-protein ligase RNF126.